A 305-amino-acid polypeptide reads, in one-letter code: Imidazoleglycerol-phosphate dehydratase (305 aa).

Belongs to the imidazoleglycerol-phosphate dehydratase family.

The protein resides in the cytoplasm. The catalysed reaction is D-erythro-1-(imidazol-4-yl)glycerol 3-phosphate = 3-(imidazol-4-yl)-2-oxopropyl phosphate + H2O. It functions in the pathway amino-acid biosynthesis; L-histidine biosynthesis; L-histidine from 5-phospho-alpha-D-ribose 1-diphosphate: step 6/9. In Neisseria meningitidis serogroup C (strain 053442), this protein is Imidazoleglycerol-phosphate dehydratase.